Here is a 178-residue protein sequence, read N- to C-terminus: Bifunctional protein PyrR (178 aa).

The PRPP-binding motif lies at 99-111; sequence IIIIDDVLYTCRT.

It belongs to the purine/pyrimidine phosphoribosyltransferase family. PyrR subfamily. In terms of assembly, homodimer and homohexamer; in equilibrium.

It catalyses the reaction UMP + diphosphate = 5-phospho-alpha-D-ribose 1-diphosphate + uracil. Its function is as follows. Regulates transcriptional attenuation of the pyrimidine nucleotide (pyr) operon by binding in a uridine-dependent manner to specific sites on pyr mRNA. This disrupts an antiterminator hairpin in the RNA and favors formation of a downstream transcription terminator, leading to a reduced expression of downstream genes. Also displays a weak uracil phosphoribosyltransferase activity which is not physiologically significant. The sequence is that of Bifunctional protein PyrR from Clostridium beijerinckii (strain ATCC 51743 / NCIMB 8052) (Clostridium acetobutylicum).